The chain runs to 184 residues: Small ribosomal subunit protein uS7 (184 aa).

The protein belongs to the universal ribosomal protein uS7 family. Part of the 30S ribosomal subunit.

Functionally, one of the primary rRNA binding proteins, it binds directly to 16S rRNA where it nucleates assembly of the head domain of the 30S subunit. Is located at the subunit interface close to the decoding center. The protein is Small ribosomal subunit protein uS7 of Thermoplasma volcanium (strain ATCC 51530 / DSM 4299 / JCM 9571 / NBRC 15438 / GSS1).